We begin with the raw amino-acid sequence, 2544 residues long: DNA polymerase theta (2544 aa).

The span at 1 to 13 (MSLPRRSRKRRRS) shows a compositional bias: basic residues. The segment at 1–57 (MSLPRRSRKRRRSSSGSDTFSGDGDSFVSPQLRCGPVLSPPPGLGRGRRLTGTGTNK) is disordered. The span at 14–29 (SSGSDTFSGDGDSFVS) shows a compositional bias: low complexity. ATP contacts are provided by residues Gln-95 and 114 to 121 (APTSAGKT). Residues 101 to 285 (LGHVLEGKNL…WLNAELYHTD (185 aa)) form the Helicase ATP-binding domain. The interval 101–551 (LGHVLEGKNL…STSQDMQTYA (451 aa)) is helicase activity. The short motif at 215 to 218 (DELH) is the DEAH box element. In terms of domain architecture, Helicase C-terminal spans 320 to 551 (GDEDHIVSLC…STSQDMQTYA (232 aa)). The interval 844 to 890 (DEEEEAAEERRSMRTIWVTGKGLSAREAAALIVEEAKMILQQDLIEM) is interaction with RAD51. The interval 896–955 (PKSPLSSSTHSRTSTSEVKEHTFKSQTKSSHKRLASMGRNSIRASGSNDKPSPDAERGID) is disordered. Over residues 898-911 (SPLSSSTHSRTSTS) the composition is skewed to low complexity. A compositionally biased stretch (polar residues) spans 933-945 (GRNSIRASGSNDK). A compositionally biased stretch (basic and acidic residues) spans 946–955 (PSPDAERGID). Lys-983 carries the post-translational modification N6-acetyllysine. Residues 1022–1034 (LSFSSEQVNNTLP) show a composition bias toward polar residues. Disordered stretches follow at residues 1022–1058 (LSFSSEQVNNTLPSGRDRKYQKKSWGSSPVRDSGMHR) and 1128–1167 (VGHPAAGSSPAAARDRRGLAARETEKGNEALTENGGESQL). The segment covering 1128 to 1139 (VGHPAAGSSPAA) has biased composition (low complexity). Residues 1140 to 1155 (ARDRRGLAARETEKGN) are compositionally biased toward basic and acidic residues. Ser-1265 is modified (phosphoserine). Disordered stretches follow at residues 1266–1288 (GVQGKTGAHATNRTEHSHASNPA) and 1331–1353 (QNKCHSTPGDQHVPGAANTDHVD). Phosphoserine occurs at positions 1438, 1442, 1444, and 1449. A disordered region spans residues 1478–1501 (FSNPPHPQEDPVMTPTVSEPQGTQ). A compositionally biased stretch (polar residues) spans 1492 to 1501 (PTVSEPQGTQ). Ser-1511, Ser-1519, Ser-1585, and Ser-1592 each carry phosphoserine. Residues 1557–1591 (ECPQGKLVRGDQNEGSPKPKLTETNQDNSFTWSGA) form a disordered region. Positions 1578–1591 (TETNQDNSFTWSGA) are enriched in polar residues. 2 stretches are compositionally biased toward basic and acidic residues: residues 1606–1616 (VSSPRENEKPK) and 1628–1638 (NSKESHEREEI). The disordered stretch occupies residues 1606–1697 (VSSPRENEKP…GLIPPTPVPA (92 aa)). The span at 1641-1652 (DLGTVQRTSVFP) shows a compositional bias: polar residues. Basic and acidic residues predominate over residues 1656–1667 (VKNRTEGLESKA). Thr-1710 bears the Phosphothreonine mark. The interval 2052-2538 (AECESQKHVM…KVKIGASWGE (487 aa)) is DNA polymerase activity. 2 loop regions span residues 2097–2132 (KLPPNGEMKTQGSKKTLGSTRRGNESGRRMRLGRQF) and 2212–2276 (EIKM…VPFP). Residues 2104–2117 (MKTQGSKKTLGSTR) show a composition bias toward polar residues. The tract at residues 2104 to 2124 (MKTQGSKKTLGSTRRGNESGR) is disordered. The For DNA polymerase activity role is filled by Asp-2284. Residues Asp-2284 and Tyr-2285 each contribute to the Mg(2+) site. Residues 2445 to 2489 (QLETFRSTFKSHGHRESMLQNDRTGLLPKRKLKGMFCPMRGGFFI) form a loop 3 region. Asp-2494 contacts Mg(2+).

It belongs to the DNA polymerase type-A family. In terms of assembly, homomultimer; forms homodimers and homotetramers. Interacts with RAD51. Interacts with ORC2 and ORC4. Interacts with RHNO1; interaction takes place during mitosis and promotes POLQ recruitment to DNA damage sites. Interacts (when phosphorylated) with TOPBP1 (via BRCT domains 7 and 8); promoting POLQ recruitment to DNA damage sites. Mg(2+) serves as cofactor. In terms of processing, phosphorylated by PLK1; promoting interaction with TOPBP1 and recruitment to DNA damage sites.

The protein resides in the nucleus. It localises to the chromosome. It catalyses the reaction DNA(n) + a 2'-deoxyribonucleoside 5'-triphosphate = DNA(n+1) + diphosphate. The enzyme catalyses ATP + H2O = ADP + phosphate + H(+). Its function is as follows. Low-fidelity DNA polymerase with a helicase activity that promotes microhomology-mediated end-joining (MMEJ), an alternative non-homologous end-joining (NHEJ) machinery required to repair double-strand breaks in DNA during mitosis. MMEJ is an error-prone repair pathway that produces deletions of sequences from the strand being repaired and promotes genomic rearrangements, such as telomere fusions, some of them leading to cellular transformation. MMEJ is required during mitosis to repair persistent double-strand breaks that originate in S-phase. Although error-prone, MMEJ protects against chromosomal instability and tumorigenesis. The polymerase acts by binding directly the 2 ends of resected double-strand breaks, allowing microhomologous sequences in the overhangs to form base pairs. It then extends each strand from the base-paired region using the opposing overhang as a template. Requires partially resected DNA containing 2 to 6 base pairs of microhomology to perform MMEJ. The polymerase lacks proofreading activity and is highly promiscuous: unlike most polymerases, promotes extension of ssDNA and partial ssDNA (pssDNA) substrates. When the ends of a break do not contain terminal microhomology must identify embedded complementary sequences through a scanning step. Also acts as a DNA helicase, promoting dissociation of the replication protein A complex (RPA/RP-A), composed of RPA1, RPA2 and RPA3, from resected double-strand breaks to allow their annealing and subsequent joining by MMEJ. Removal of RPA/RP-A complex proteins prevents RAD51 accumulation at resected ends, thereby inhibiting homology-recombination repair (HR) pathway. Also shows RNA-directed DNA polymerase activity to mediate DNA repair in vitro; however this activity needs additional evidence in vivo. May also have lyase activity. Involved in somatic hypermutation of immunoglobulin genes, a process that requires the activity of DNA polymerases to ultimately introduce mutations at both A/T and C/G base pairs. However, POLQ does not play a major role in somatic hypermutation. POLQ-mediated end joining activity is involved in random integration of exogenous DNA hampers. This Mus musculus (Mouse) protein is DNA polymerase theta.